Reading from the N-terminus, the 160-residue chain is ATP synthase subunit b (160 aa).

The chain crosses the membrane as a helical span at residues 12–32 (ISFVLFVWFCMKYVWYPFISI).

It belongs to the ATPase B chain family. F-type ATPases have 2 components, F(1) - the catalytic core - and F(0) - the membrane proton channel. F(1) has five subunits: alpha(3), beta(3), gamma(1), delta(1), epsilon(1). F(0) has three main subunits: a(1), b(2) and c(10-14). The alpha and beta chains form an alternating ring which encloses part of the gamma chain. F(1) is attached to F(0) by a central stalk formed by the gamma and epsilon chains, while a peripheral stalk is formed by the delta and b chains.

Its subcellular location is the cell inner membrane. F(1)F(0) ATP synthase produces ATP from ADP in the presence of a proton or sodium gradient. F-type ATPases consist of two structural domains, F(1) containing the extramembraneous catalytic core and F(0) containing the membrane proton channel, linked together by a central stalk and a peripheral stalk. During catalysis, ATP synthesis in the catalytic domain of F(1) is coupled via a rotary mechanism of the central stalk subunits to proton translocation. In terms of biological role, component of the F(0) channel, it forms part of the peripheral stalk, linking F(1) to F(0). The protein is ATP synthase subunit b of Blochmanniella pennsylvanica (strain BPEN).